The primary structure comprises 211 residues: Probable nicotinate-nucleotide adenylyltransferase (211 aa).

This sequence belongs to the NadD family.

The catalysed reaction is nicotinate beta-D-ribonucleotide + ATP + H(+) = deamido-NAD(+) + diphosphate. It functions in the pathway cofactor biosynthesis; NAD(+) biosynthesis; deamido-NAD(+) from nicotinate D-ribonucleotide: step 1/1. Functionally, catalyzes the reversible adenylation of nicotinate mononucleotide (NaMN) to nicotinic acid adenine dinucleotide (NaAD). This Legionella pneumophila (strain Lens) protein is Probable nicotinate-nucleotide adenylyltransferase.